Reading from the N-terminus, the 394-residue chain is MGIKQLFTIIKENAPAAIKTGEIKNQFGRKVAIDASMSIYSFLIAVRSNGEMLTNEDGQTTSHLMGMFYRTLRMVDNGIKPLYVFDGAPPKLKSGELARRYQRKQEALEGLEEARETGTAEDVEKFSRRTVRVTREHNEECRQLLKLMGIPYIIAPTEAEAQCAVLARAGKVFAAASEDMDTLCFDSPILLRHLTFSEARKEPIQEIHVDKVLEGLDMDRKQFVDLCILLGCDYLDPIPKVGPSTALKLIREHGSLETIVEKMKKGELKYTVPEDWPFEDARDLFFNPAVHPADHPDCNFKWEKPDVEGLVKYLVTEKGFSEDRVRPGALRLEKALGTSQQQRLEGFFKPVARTAEEQKAHKRKLEVKAEEAKKKLKAEKKEKAKAKARPRGTA.

The segment at 1–104 (MGIKQLFTII…GELARRYQRK (104 aa)) is N-domain. Mg(2+) is bound at residue aspartate 34. The DNA site is built by arginine 47 and arginine 70. 5 residues coordinate Mg(2+): aspartate 86, glutamate 158, glutamate 160, aspartate 179, and aspartate 181. The tract at residues 122-253 (DVEKFSRRTV…STALKLIREH (132 aa)) is I-domain. DNA is bound at residue glutamate 158. Residues glycine 231 and aspartate 233 each coordinate DNA. Aspartate 233 is a Mg(2+) binding site. The interaction with PCNA stretch occupies residues 340 to 348 (QQQRLEGFF). The tract at residues 358 to 394 (QKAHKRKLEVKAEEAKKKLKAEKKEKAKAKARPRGTA) is disordered. Residues 374 to 394 (KKLKAEKKEKAKAKARPRGTA) show a composition bias toward basic residues.

This sequence belongs to the XPG/RAD2 endonuclease family. FEN1 subfamily. In terms of assembly, interacts with PCNA. Three molecules of FEN1 bind to one PCNA trimer with each molecule binding to one PCNA monomer. PCNA stimulates the nuclease activity without altering cleavage specificity. Mg(2+) serves as cofactor. Post-translationally, phosphorylated. Phosphorylation upon DNA damage induces relocalization to the nuclear plasma.

It localises to the nucleus. The protein resides in the nucleolus. The protein localises to the nucleoplasm. It is found in the mitochondrion. In terms of biological role, structure-specific nuclease with 5'-flap endonuclease and 5'-3' exonuclease activities involved in DNA replication and repair. During DNA replication, cleaves the 5'-overhanging flap structure that is generated by displacement synthesis when DNA polymerase encounters the 5'-end of a downstream Okazaki fragment. It enters the flap from the 5'-end and then tracks to cleave the flap base, leaving a nick for ligation. Also involved in the long patch base excision repair (LP-BER) pathway, by cleaving within the apurinic/apyrimidinic (AP) site-terminated flap. Acts as a genome stabilization factor that prevents flaps from equilibrating into structures that lead to duplications and deletions. Also possesses 5'-3' exonuclease activity on nicked or gapped double-stranded DNA, and exhibits RNase H activity. Also involved in replication and repair of rDNA and in repairing mitochondrial DNA. The sequence is that of Flap endonuclease 1 from Pyricularia oryzae (strain 70-15 / ATCC MYA-4617 / FGSC 8958) (Rice blast fungus).